The chain runs to 673 residues: L-type lectin-domain containing receptor kinase SIT2 (673 aa).

The first 27 residues, 1-27, serve as a signal peptide directing secretion; sequence MVLPKPEMPFFVLLLFLGLGCLRPAAA. Residues 28 to 296 are Extracellular-facing; the sequence is TDERFVFNGF…FPKPRSKTLE (269 aa). Residues 32–270 form a legume-lectin like region; it reads FVFNGFTGAN…VLGWSFKMNG (239 aa). 9 N-linked (GlcNAc...) asparagine glycosylation sites follow: Asn41, Asn60, Asn82, Asn118, Asn138, Asn191, Asn214, Asn235, and Asn276. The helical transmembrane segment at 297 to 317 threads the bilayer; sequence IVLPIASAVLVFAVAAAVFVF. The Cytoplasmic portion of the chain corresponds to 318–673; it reads MRRRRMFSEL…GTFSDLSGGR (356 aa). A Protein kinase domain is found at 352–631; it reads FSDKRLLGIG…LEGDVPLPEL (280 aa). ATP contacts are provided by residues 358–366 and Lys381; that span reads LGIGGFGRV. The active-site Proton acceptor is Asp477.

The protein in the C-terminal section; belongs to the protein kinase superfamily. Ser/Thr protein kinase family. This sequence in the N-terminal section; belongs to the leguminous lectin family. As to expression, mainly expressed in root epidermal cells.

The protein resides in the cell membrane. The enzyme catalyses L-seryl-[protein] + ATP = O-phospho-L-seryl-[protein] + ADP + H(+). It catalyses the reaction L-threonyl-[protein] + ATP = O-phospho-L-threonyl-[protein] + ADP + H(+). Its function is as follows. Lectin-domain containing receptor kinase involved in salt stress response. Acts as a negative regulator of salt tolerance. This chain is L-type lectin-domain containing receptor kinase SIT2, found in Oryza sativa subsp. japonica (Rice).